Here is a 999-residue protein sequence, read N- to C-terminus: Probable K(+)/H(+) antiporter subunit A/B (999 aa).

The tract at residues 1–20 is disordered; it reads MTRPASVLAGPKSRPPIHSQ. A run of 24 helical transmembrane segments spans residues 31–48, 63–85, 106–128, 138–160, 162–181, 191–213, 233–255, 270–292, 299–321, 336–358, 389–411, 442–464, 488–510, 530–552, 604–621, 636–653, 660–682, 686–708, 729–751, 788–807, 846–868, 878–900, 913–935, and 955–977; these read LLSVFILVPFAGSLIAIF, AIALVCFLVTAGLYPYVASGGVL, FAWLFSALITAIGVLVALYARYY, FFALFLAFMGSMLGVVLSGNLIL, AVFWELTSIVSFLLIGYWHH, MALTITGTGGLAMFVGLIIIGKI, PLYGTVLVLVLLGALTKSAQFPF, SAYLHSATMVKAGVFLLVRFWPV, WFWIVGLAGLTTLLLGAYFAIFQ, LGLITVLLSLGSPLAAVAAVFHI, GLFHFMPITATLAMVASAAMAGV, YVATIAGMFAVTYSLRFIHGVFF, FLVLACLVVGIIPAQTIGPFLHT, GWNIPLIMSFVALSGGIGLYFLM, RLLVFLALAAGASPLLLG, AFALLWAIGIACAIGSAY, LASLVLLGGAGLVTCITFVWLSA, AVTQLLVEIVTTVLILLGLRWLP, LRDLLLAIGAGGGMMLIAYTVMT, TLGEIAVLCIVALTVFALLL, FIPAVIMRWMFPVTGMLAAFLFL, FAAGIAMSIGFILQYMSGGTRWV, SIGLLVATATGVGSWFFGYPFLT, and ILFDLGVFSLVLGATVLILIALA.

The protein in the N-terminal section; belongs to the CPA3 antiporters (TC 2.A.63) subunit A family. This sequence in the C-terminal section; belongs to the CPA3 antiporters (TC 2.A.63) subunit B family. May form a heterooligomeric complex that consists of six subunits: PhaAB, PhaC, PhaD, PhaE, PhaF and PhaG.

It is found in the cell membrane. Its function is as follows. Part of a K(+) efflux system which is required for the adaptation of R.meliloti to alkaline pH as well as for the infection process during symbiotic nodule development. This is Probable K(+)/H(+) antiporter subunit A/B (phaAB) from Rhizobium meliloti (strain 1021) (Ensifer meliloti).